Reading from the N-terminus, the 224-residue chain is Ribose-5-phosphate isomerase A (224 aa).

Residues 26–29 (TGST), 81–84 (DGAD), and 94–97 (KGGG) each bind substrate. E103 (proton acceptor) is an active-site residue. K121 lines the substrate pocket.

Belongs to the ribose 5-phosphate isomerase family. As to quaternary structure, homodimer.

The catalysed reaction is aldehydo-D-ribose 5-phosphate = D-ribulose 5-phosphate. It participates in carbohydrate degradation; pentose phosphate pathway; D-ribose 5-phosphate from D-ribulose 5-phosphate (non-oxidative stage): step 1/1. Catalyzes the reversible conversion of ribose-5-phosphate to ribulose 5-phosphate. The protein is Ribose-5-phosphate isomerase A of Listeria monocytogenes serotype 4b (strain F2365).